The sequence spans 852 residues: Cytochrome P450 monooxygenase mpaDE (852 aa).

Over 1–6 (MDYLII) the chain is Lumenal. A helical membrane pass occupies residues 7–29 (IRITAVAVVLYLTRYVCCLYLHL). Residues 30–852 (QDVPGPLFAK…DLEDAMEGTK (823 aa)) lie on the Cytoplasmic side of the membrane. A heme-binding site is contributed by Cys-448.

It belongs to the cytochrome P450 family. It depends on heme as a cofactor.

It localises to the endoplasmic reticulum membrane. The catalysed reaction is 5-methylorsellinate + reduced [NADPH--hemoprotein reductase] + O2 = 4,6-dihydroxy-2-(hydroxymethyl)-3-methylbenzoate + oxidized [NADPH--hemoprotein reductase] + H2O + H(+). The enzyme catalyses 4,6-dihydroxy-2-(hydroxymethyl)-3-methylbenzoate + H(+) = 5,7-dihydroxy-4-methylphthalide + H2O. It functions in the pathway secondary metabolite biosynthesis; terpenoid biosynthesis. Functionally, cytochrome P450 monooxygenase; part of the gene cluster that mediates the biosynthesis of mycophenolic acid (MPA), the first isolated antibiotic natural product in the world obtained from a culture of Penicillium brevicompactum in 1893. MpaDE is an endoplasmic reticulum-bound enzyme that catalyzes the conversion of 5-methylorsellinic acid (5MOA) into the phthalide compound 5,7-dihydroxy-4,6-dimethylphthalide (DHMP). MpaDE first catalyzes hydroxylation of 5-MOA to 4,6-dihydroxy-2-(hydroxymethyl)-3-methylbenzoic acid (DHMB), and then acts as a lactone synthase that catalyzes the ring closure to convert DHMB into DHMP. The first step of the pathway is the synthesis of 5-methylorsellinic acid (5MOA) by the cytosolic polyketide synthase mpaC. 5MOA is then converted to the phthalide compound 5,7-dihydroxy-4,6-dimethylphthalide (DHMP) by the endoplasmic reticulum-bound cytochrome P450 monooxygenase mpaDE. MpaDE first catalyzes hydroxylation of 5-MOA to 4,6-dihydroxy-2-(hydroxymethyl)-3-methylbenzoic acid (DHMB). MpaDE then acts as a lactone synthase that catalyzes the ring closure to convert DHMB into DHMP. The next step is the prenylation of DHMP by the Golgi apparatus-associated prenyltransferase mpaA to yield farnesyl-DHMP (FDHMP). The ER-bound oxygenase mpaB then mediates the oxidative cleavage the C19-C20 double bond in FDHMP to yield FDHMP-3C via a mycophenolic aldehyde intermediate. The O-methyltransferase mpaG catalyzes the methylation of FDHMP-3C to yield MFDHMP-3C. After the cytosolic methylation of FDHMP-3C, MFDHMP-3C enters into peroxisomes probably via free diffusion due to its low molecular weight. Upon a peroxisomal CoA ligation reaction, catalyzed by a beta-oxidation component enzyme acyl-CoA ligase ACL891, MFDHMP-3C-CoA would then be restricted to peroxisomes for the following beta-oxidation pathway steps. The peroxisomal beta-oxidation machinery than converts MFDHMP-3C-CoA into MPA_CoA, via a beta-oxidation chain-shortening process. Finally mpaH acts as a peroxisomal acyl-CoA hydrolase with high substrate specificity toward MPA-CoA to release the final product MPA. This chain is Cytochrome P450 monooxygenase mpaDE, found in Penicillium roqueforti (strain FM164).